The sequence spans 506 residues: Dolabradiene monooxygenase (506 aa).

A helical transmembrane segment spans residues 5–25 (VLLAVAMVALIAVLSKLKSLL). Cysteine 443 is a binding site for heme.

It belongs to the cytochrome P450 family. It depends on heme as a cofactor.

It localises to the membrane. It carries out the reaction dolabradiene + reduced [NADPH--hemoprotein reductase] + O2 = 15,16-epoxydolabrene + oxidized [NADPH--hemoprotein reductase] + H2O + H(+). The catalysed reaction is 15,16-epoxydolabrene + reduced [NADPH--hemoprotein reductase] + O2 = 3beta-hydroxy-15,16-epoxydolabrene + oxidized [NADPH--hemoprotein reductase] + H2O + H(+). Its function is as follows. Involved in the production of antifungal dolabralexin phytoalexins in response to biotic and abiotic stresses. Catalyzes the epoxidation of dolabradiene at C-16, followed by hydroxylation at C-3, to yield the epoxides 15,16-epoxydolabrene (epoxydolabrene) and 3b-hydroxy-15,16-epoxydolabrene (epoxydolabranol). The protein is Dolabradiene monooxygenase of Zea mays (Maize).